We begin with the raw amino-acid sequence, 158 residues long: Ankyrin repeat domain-containing protein 37 (158 aa).

3 ANK repeats span residues 1–25 (MLLL…SVNA), 30–59 (CKQS…DLNQ), and 63–92 (LGEA…QIDL). Residues 129-149 (EHPDRNDCVAVLRQKRSLGSV) carry the Nuclear localization signal motif.

Post-translationally, ubiquitinated by the CRL2(FEM1B) complex, leading to its degradation. In terms of tissue distribution, mainly expressed in testis, small intestine, colon, blood leukocytes and in pancreatic adenocarcinoma cells.

The protein resides in the nucleus. It localises to the cytoplasm. The protein is Ankyrin repeat domain-containing protein 37 of Homo sapiens (Human).